Here is a 178-residue protein sequence, read N- to C-terminus: Large ribosomal subunit protein uL6 (178 aa).

Belongs to the universal ribosomal protein uL6 family. As to quaternary structure, part of the 50S ribosomal subunit.

Functionally, this protein binds to the 23S rRNA, and is important in its secondary structure. It is located near the subunit interface in the base of the L7/L12 stalk, and near the tRNA binding site of the peptidyltransferase center. This chain is Large ribosomal subunit protein uL6, found in Streptococcus gordonii (strain Challis / ATCC 35105 / BCRC 15272 / CH1 / DL1 / V288).